The sequence spans 239 residues: Purine nucleoside phosphorylase DeoD-type (239 aa).

Histidine 5 is a binding site for a purine D-ribonucleoside. Phosphate contacts are provided by residues glycine 21, arginine 25, arginine 44, and 88–91 (RVGS). A purine D-ribonucleoside-binding positions include 180 to 182 (EME) and 204 to 205 (SD). The active-site Proton donor is the aspartate 205.

It belongs to the PNP/UDP phosphorylase family. As to quaternary structure, homohexamer; trimer of homodimers.

It carries out the reaction a purine D-ribonucleoside + phosphate = a purine nucleobase + alpha-D-ribose 1-phosphate. The catalysed reaction is a purine 2'-deoxy-D-ribonucleoside + phosphate = a purine nucleobase + 2-deoxy-alpha-D-ribose 1-phosphate. In terms of biological role, catalyzes the reversible phosphorolytic breakdown of the N-glycosidic bond in the beta-(deoxy)ribonucleoside molecules, with the formation of the corresponding free purine bases and pentose-1-phosphate. This is Purine nucleoside phosphorylase DeoD-type from Citrobacter koseri (strain ATCC BAA-895 / CDC 4225-83 / SGSC4696).